A 235-amino-acid chain; its full sequence is Purine nucleoside phosphorylase DeoD-type (235 aa).

H4 is an a purine D-ribonucleoside binding site. Phosphate contacts are provided by residues G20, R24, R43, and 87–90 (RVGT). Residues E162, 179 to 181 (EME), and 203 to 204 (SD) each bind a purine D-ribonucleoside. The Proton donor role is filled by D204.

This sequence belongs to the PNP/UDP phosphorylase family. As to quaternary structure, homohexamer; trimer of homodimers.

The catalysed reaction is a purine D-ribonucleoside + phosphate = a purine nucleobase + alpha-D-ribose 1-phosphate. It carries out the reaction a purine 2'-deoxy-D-ribonucleoside + phosphate = a purine nucleobase + 2-deoxy-alpha-D-ribose 1-phosphate. Its function is as follows. Catalyzes the reversible phosphorolytic breakdown of the N-glycosidic bond in the beta-(deoxy)ribonucleoside molecules, with the formation of the corresponding free purine bases and pentose-1-phosphate. The polypeptide is Purine nucleoside phosphorylase DeoD-type (Bacillus anthracis (strain CDC 684 / NRRL 3495)).